A 272-amino-acid chain; its full sequence is Prohibitin 1 (272 aa).

A coiled-coil region spans residues 177-211 (KEFTEAVEMKQVAQQEAERARFIVEKAEQQKKAAV).

The mitochondrial prohibitin complex consists of two subunits (PHB1 and PHB2), assembled into a membrane-associated ring-shaped supercomplex of approximately 1 mDa.

It localises to the mitochondrion inner membrane. The protein localises to the nucleus. The protein resides in the cytoplasm. It is found in the cell membrane. In terms of biological role, protein with pleiotropic attributes mediated in a cell-compartment- and tissue-specific manner, which include the plasma membrane-associated cell signaling functions, mitochondrial chaperone, and transcriptional co-regulator of transcription factors in the nucleus. Functionally, in the mitochondria, together with PHB2, forms large ring complexes (prohibitin complexes) in the inner mitochondrial membrane (IMM) and functions as a chaperone protein that stabilizes mitochondrial respiratory enzymes and maintains mitochondrial integrity in the IMM, which is required for mitochondrial morphogenesis, neuronal survival, and normal lifespan. Its function is as follows. In the nucleus, acts as a transcription coregulator, enhances promoter binding by TP53, a transcription factor it activates, but reduces the promoter binding by E2F1, a transcription factor it represses. In the plasma membrane, cooperates with CD86 to mediate CD86-signaling in B lymphocytes that regulates the level of IgG1 produced through the activation of distal signaling intermediates. Upon CD40 engagement, required to activate NF-kappa-B signaling pathway via phospholipase C and protein kinase C activation. The polypeptide is Prohibitin 1 (PHB1) (Gallus gallus (Chicken)).